We begin with the raw amino-acid sequence, 677 residues long: Methionine--tRNA ligase (677 aa).

Positions 15–25 match the 'HIGH' region motif; sequence PYANGSIHLGH. Cysteine 146, cysteine 149, cysteine 159, and cysteine 162 together coordinate Zn(2+). Positions 333–337 match the 'KMSKS' region motif; it reads KMSKS. Lysine 336 contributes to the ATP binding site. Residues 575-677 form the tRNA-binding domain; that stretch reads DFAKIDLRVA…DGAKPGQQVK (103 aa).

Belongs to the class-I aminoacyl-tRNA synthetase family. MetG type 1 subfamily. Homodimer. It depends on Zn(2+) as a cofactor.

It localises to the cytoplasm. It catalyses the reaction tRNA(Met) + L-methionine + ATP = L-methionyl-tRNA(Met) + AMP + diphosphate. Is required not only for elongation of protein synthesis but also for the initiation of all mRNA translation through initiator tRNA(fMet) aminoacylation. This chain is Methionine--tRNA ligase, found in Salmonella typhimurium (strain LT2 / SGSC1412 / ATCC 700720).